The chain runs to 76 residues: Putative antitoxin VapB2 (76 aa).

It belongs to the UPF0330 family.

Possibly the antitoxin component of a type II toxin-antitoxin (TA) system. Its cognate toxin is VapC2 (Potential). The polypeptide is Putative antitoxin VapB2 (vapB2) (Pyrococcus abyssi (strain GE5 / Orsay)).